Reading from the N-terminus, the 414-residue chain is Enterobactin exporter EntS (414 aa).

At 1 to 21 (MNRQSWLLNLSLLKTHPAFRA) the chain is on the cytoplasmic side. Residues 22–42 (VFLARFISIVSLGLLGVAVPV) form a helical membrane-spanning segment. The Periplasmic segment spans residues 43–55 (QIQMMTHSTWQVG). Residues 56–76 (LSVTLTGGAMFIGLMVGGVLA) form a helical membrane-spanning segment. Residues 77-83 (DRYERKK) are Cytoplasmic-facing. The chain crosses the membrane as a helical span at residues 84–104 (VILLARGTCGIGFIGLCVNAL). The Periplasmic portion of the chain corresponds to 105-109 (LPEPS). The helical transmembrane segment at 110–130 (LLAIYLLGLWDGFFASLGVTA) threads the bilayer. Topologically, residues 131–156 (LLAATPALVGRENLMQAGAITMLTVR) are cytoplasmic. Residues 157–177 (LGSVISPMLGGILLASGGVAW) form a helical membrane-spanning segment. A topological domain (periplasmic) is located at residue asparagine 178. Residues 179–199 (YGLAAAGTFITLLPLLTLPRL) traverse the membrane as a helical segment. The Cytoplasmic segment spans residues 200-218 (PVPPQPRENPFIALLAAFR). A helical transmembrane segment spans residues 219-239 (FLLASPLIGGIALLGGLVTMA). Over 240 to 256 (SAVRVLYPALAMSWQMS) the chain is Periplasmic. Residues 257–277 (AAQIGLLYAAIPLGAAIGALT) form a helical membrane-spanning segment. Residues 278 to 287 (SGQLAHSVRP) are Cytoplasmic-facing. Residues 288–307 (GLIMLVSTVGSFLAVGLFAI) traverse the membrane as a helical segment. At 308-313 (MPVWIA) the chain is on the periplasmic side. The helical transmembrane segment at 314–336 (GVICLALFGWLSAISSLLQYTLL) threads the bilayer. The Cytoplasmic segment spans residues 337–356 (QTQTPENMLGRMNGLWTAQN). Residues 357-377 (VTGDAIGAALLGGLGAMMTPV) traverse the membrane as a helical segment. A topological domain (periplasmic) is located at residue alanine 378. A helical transmembrane segment spans residues 379–399 (SASVSGFGLVIIGLLLLLVLG). At 400-414 (ELRRFRQTPPVSDAG) the chain is on the cytoplasmic side.

The protein belongs to the major facilitator superfamily. EntS (TC 2.A.1.38) family.

It localises to the cell inner membrane. Its function is as follows. Component of an export pathway for enterobactin. The protein is Enterobactin exporter EntS of Salmonella typhimurium (strain LT2 / SGSC1412 / ATCC 700720).